We begin with the raw amino-acid sequence, 86 residues long: Weak toxin 1 (86 aa).

An N-terminal signal peptide occupies residues 1-23 (MKTLLLTLVVVAIVCLDLGYTLT). 5 disulfide bridges follow: cysteine 24–cysteine 45, cysteine 27–cysteine 32, cysteine 38–cysteine 63, cysteine 67–cysteine 78, and cysteine 79–cysteine 84.

The protein belongs to the three-finger toxin family. Ancestral subfamily. Orphan group II sub-subfamily. In terms of tissue distribution, expressed by the venom gland.

The protein resides in the secreted. Functionally, binds with low affinity to muscular (alpha-1-beta-1-delta-epsilon/CHRNA1-CHRNB1-CHRND-CHRNE) and very low affinity to neuronal (alpha-7/CHRNA7) nicotinic acetylcholine receptor (nAChR). The protein is Weak toxin 1 of Bungarus candidus (Malayan krait).